Reading from the N-terminus, the 256-residue chain is Triosephosphate isomerase (256 aa).

A substrate-binding site is contributed by 9-11 (NWK). H96 acts as the Electrophile in catalysis. The Proton acceptor role is filled by E168. Substrate is bound by residues S213 and 234-235 (GG).

Belongs to the triosephosphate isomerase family. In terms of assembly, homodimer.

It is found in the cytoplasm. It catalyses the reaction D-glyceraldehyde 3-phosphate = dihydroxyacetone phosphate. It functions in the pathway carbohydrate biosynthesis; gluconeogenesis. It participates in carbohydrate degradation; glycolysis; D-glyceraldehyde 3-phosphate from glycerone phosphate: step 1/1. Functionally, involved in the gluconeogenesis. Catalyzes stereospecifically the conversion of dihydroxyacetone phosphate (DHAP) to D-glyceraldehyde-3-phosphate (G3P). The protein is Triosephosphate isomerase of Baumannia cicadellinicola subsp. Homalodisca coagulata.